A 269-amino-acid polypeptide reads, in one-letter code: Tryptophan synthase alpha chain (269 aa).

Residues E41 and D52 each act as proton acceptor in the active site.

This sequence belongs to the TrpA family. Tetramer of two alpha and two beta chains.

It carries out the reaction (1S,2R)-1-C-(indol-3-yl)glycerol 3-phosphate + L-serine = D-glyceraldehyde 3-phosphate + L-tryptophan + H2O. The protein operates within amino-acid biosynthesis; L-tryptophan biosynthesis; L-tryptophan from chorismate: step 5/5. The alpha subunit is responsible for the aldol cleavage of indoleglycerol phosphate to indole and glyceraldehyde 3-phosphate. The polypeptide is Tryptophan synthase alpha chain (Geobacillus stearothermophilus (Bacillus stearothermophilus)).